We begin with the raw amino-acid sequence, 158 residues long: NAD(P)H-quinone oxidoreductase subunit N (158 aa).

This sequence belongs to the complex I NdhN subunit family. As to quaternary structure, NDH-1 can be composed of about 15 different subunits; different subcomplexes with different compositions have been identified which probably have different functions.

Its subcellular location is the cellular thylakoid membrane. It carries out the reaction a plastoquinone + NADH + (n+1) H(+)(in) = a plastoquinol + NAD(+) + n H(+)(out). The catalysed reaction is a plastoquinone + NADPH + (n+1) H(+)(in) = a plastoquinol + NADP(+) + n H(+)(out). NDH-1 shuttles electrons from an unknown electron donor, via FMN and iron-sulfur (Fe-S) centers, to quinones in the respiratory and/or the photosynthetic chain. The immediate electron acceptor for the enzyme in this species is believed to be plastoquinone. Couples the redox reaction to proton translocation, and thus conserves the redox energy in a proton gradient. Cyanobacterial NDH-1 also plays a role in inorganic carbon-concentration. This Prochlorococcus marinus (strain MIT 9312) protein is NAD(P)H-quinone oxidoreductase subunit N.